The primary structure comprises 918 residues: Plasma membrane ATPase 1 (918 aa).

Over residues 1-18 (MTDTSSSSSSSSASSVSA) the composition is skewed to low complexity. The tract at residues 1-84 (MTDTSSSSSS…VPEEYLQTDP (84 aa)) is disordered. Over 1 to 115 (MTDTSSSSSS…ADEKESLVVK (115 aa)) the chain is Cytoplasmic. A compositionally biased stretch (acidic residues) spans 33–47 (AASESSDDDDIDALI). Phosphoserine is present on S61. Residues 116-136 (FVMFFVGPIQFVMEAAAILAA) traverse the membrane as a helical segment. The Extracellular segment spans residues 137 to 140 (GLSD). A helical membrane pass occupies residues 141-160 (WVDFGVICGLLMLNAGVGFV). At 161–291 (QEFQAGSIVD…GQGHFTEVLN (131 aa)) the chain is on the cytoplasmic side. At T175 the chain carries Phosphothreonine. A Glycyl lysine isopeptide (Lys-Gly) (interchain with G-Cter in ubiquitin) cross-link involves residue K252. The chain crosses the membrane as a helical span at residues 292 to 313 (GIGIILLVLVIATLLLVWTACF). At 314–325 (YRTNGIVRILRY) the chain is on the extracellular side. Residues 326 to 347 (TLGITIIGVPVGLPAVVTTTMA) traverse the membrane as a helical segment. The Cytoplasmic segment spans residues 348–719 (VGAAYLAKKQ…IAILDNSLDI (372 aa)). The active-site 4-aspartylphosphate intermediate is the D378. Residue K555 forms a Glycyl lysine isopeptide (Lys-Gly) (interchain with G-Cter in ubiquitin) linkage. Residues D634 and D638 each contribute to the Mg(2+) site. The chain crosses the membrane as a helical span at residues 720–738 (DLIVFIAIFADVATLAIAY). The Extracellular segment spans residues 739–754 (DNAPYSPKPVKWNLPR). The chain crosses the membrane as a helical span at residues 755–774 (LWGMSIILGIVLAIGSWITL). Topologically, residues 775–824 (TTMFLPKGGIIQNFGAMNGIMFLQISLTENWLIFITRAAGPFWSSIPSWQ) are cytoplasmic. The helical transmembrane segment at 825-845 (LAGAVFAVDIIATMFTLFGWW) threads the bilayer. Residues 846–857 (SENWTDIVTVVR) lie on the Extracellular side of the membrane. Residues 858–874 (VWIWSIGIFCVLGGFYY) traverse the membrane as a helical segment. Over 875-918 (EMSTSEAFDRLMNGKPMKEKKSTRSVEDFMAAMQRVSTQHEKET) the chain is Cytoplasmic. A Phosphoserine modification is found at S911. Phosphothreonine is present on residues T912 and T918.

This sequence belongs to the cation transport ATPase (P-type) (TC 3.A.3) family. Type IIIA subfamily. As to quaternary structure, interacts with its cargot receptor EXP1 for its transport within the cell and maturation. In terms of processing, phosphorylated on multiple Ser and Thr residues.

The protein resides in the cell membrane. The enzyme catalyses ATP + H2O + H(+)(in) = ADP + phosphate + 2 H(+)(out). Its function is as follows. The plasma membrane ATPase of plants and fungi is a hydrogen ion pump. The proton gradient it generates drives the active transport of nutrients by H(+)-symport. The resulting external acidification and/or internal alkinization may mediate growth responses. The polypeptide is Plasma membrane ATPase 1 (PMA1) (Saccharomyces cerevisiae (strain ATCC 204508 / S288c) (Baker's yeast)).